The chain runs to 74 residues: ATP synthase subunit c (74 aa).

The next 2 membrane-spanning stretches (helical) occupy residues phenylalanine 8–isoleucine 28 and isoleucine 52–isoleucine 72.

The protein belongs to the ATPase C chain family. As to quaternary structure, F-type ATPases have 2 components, F(1) - the catalytic core - and F(0) - the membrane proton channel. F(1) has five subunits: alpha(3), beta(3), gamma(1), delta(1), epsilon(1). F(0) has three main subunits: a(1), b(2) and c(10-14). The alpha and beta chains form an alternating ring which encloses part of the gamma chain. F(1) is attached to F(0) by a central stalk formed by the gamma and epsilon chains, while a peripheral stalk is formed by the delta and b chains.

It is found in the cell inner membrane. Functionally, f(1)F(0) ATP synthase produces ATP from ADP in the presence of a proton or sodium gradient. F-type ATPases consist of two structural domains, F(1) containing the extramembraneous catalytic core and F(0) containing the membrane proton channel, linked together by a central stalk and a peripheral stalk. During catalysis, ATP synthesis in the catalytic domain of F(1) is coupled via a rotary mechanism of the central stalk subunits to proton translocation. Key component of the F(0) channel; it plays a direct role in translocation across the membrane. A homomeric c-ring of between 10-14 subunits forms the central stalk rotor element with the F(1) delta and epsilon subunits. This Rickettsia conorii (strain ATCC VR-613 / Malish 7) protein is ATP synthase subunit c.